We begin with the raw amino-acid sequence, 404 residues long: Cysteine desulfurase IscS (404 aa).

Pyridoxal 5'-phosphate is bound by residues 75-76 (AT), N155, Q183, and 203-205 (SAH). N6-(pyridoxal phosphate)lysine is present on K206. T243 contributes to the pyridoxal 5'-phosphate binding site. The active-site Cysteine persulfide intermediate is C328. Residue C328 coordinates [2Fe-2S] cluster.

It belongs to the class-V pyridoxal-phosphate-dependent aminotransferase family. NifS/IscS subfamily. Homodimer. Forms a heterotetramer with IscU, interacts with other sulfur acceptors. Pyridoxal 5'-phosphate serves as cofactor.

It localises to the cytoplasm. The catalysed reaction is (sulfur carrier)-H + L-cysteine = (sulfur carrier)-SH + L-alanine. It functions in the pathway cofactor biosynthesis; iron-sulfur cluster biosynthesis. Its function is as follows. Master enzyme that delivers sulfur to a number of partners involved in Fe-S cluster assembly, tRNA modification or cofactor biosynthesis. Catalyzes the removal of elemental sulfur atoms from cysteine to produce alanine. Functions as a sulfur delivery protein for Fe-S cluster synthesis onto IscU, an Fe-S scaffold assembly protein, as well as other S acceptor proteins. This Proteus mirabilis (strain HI4320) protein is Cysteine desulfurase IscS.